The following is a 289-amino-acid chain: Somatostatin-like receptor F_48D10.1 (289 aa).

Residues 1–57 (MEPLDQTPGFPLSPEPNYWYETTPSLLLVSYPHLLDISSNQSTQSVPFQGSSALLTA) lie on the Extracellular side of the membrane. The N-linked (GlcNAc...) asparagine glycan is linked to Asn40. A helical membrane pass occupies residues 58-79 (VIYITVFVVGLTGNTLAIYVVL). Over 80–89 (RYAGMKTVTN) the chain is Cytoplasmic. The helical transmembrane segment at 90–110 (IYILNLAVADELYIVGLPFLA) threads the bilayer. Residues 111-126 (TQNVLSYWPFGSFLCR) are Extracellular-facing. Cys125 and Cys221 are joined by a disulfide. Residues 127–148 (VVMTADSMNQFTSIFCLTVMSI) form a helical membrane-spanning segment. At 149 to 170 (DRYLAVVHPIRSTKWRHPRVAK) the chain is on the cytoplasmic side. Residues 171-191 (VVSAAVWAVSFVVVLPVVIFS) traverse the membrane as a helical segment. Over 192 to 240 (DVQVRPSRPLQVGTSSKCLVKRVQETFNSCNMIWPEPKNVWSTAFILYT) the chain is Extracellular. The chain crosses the membrane as a helical span at residues 241–261 (AMVGFFGPLLIICLCYLLIVI). Residues 262-289 (KVRHRMSAAQVGAVVSTCPLNICCLSRR) are Cytoplasmic-facing.

Belongs to the G-protein coupled receptor 1 family.

It localises to the cell membrane. The chain is Somatostatin-like receptor F_48D10.1 from Takifugu rubripes (Japanese pufferfish).